Reading from the N-terminus, the 101-residue chain is Phosphoribosyl-AMP cyclohydrolase (101 aa).

Asp71 provides a ligand contact to Mg(2+). Residue Cys72 coordinates Zn(2+). Positions 73 and 75 each coordinate Mg(2+). Zn(2+) is bound by residues Cys88 and Cys95.

This sequence belongs to the PRA-CH family. Homodimer. Mg(2+) is required as a cofactor. It depends on Zn(2+) as a cofactor.

The protein resides in the cytoplasm. The catalysed reaction is 1-(5-phospho-beta-D-ribosyl)-5'-AMP + H2O = 1-(5-phospho-beta-D-ribosyl)-5-[(5-phospho-beta-D-ribosylamino)methylideneamino]imidazole-4-carboxamide. Its pathway is amino-acid biosynthesis; L-histidine biosynthesis; L-histidine from 5-phospho-alpha-D-ribose 1-diphosphate: step 3/9. Catalyzes the hydrolysis of the adenine ring of phosphoribosyl-AMP. In Bacillus cereus (strain G9842), this protein is Phosphoribosyl-AMP cyclohydrolase.